The primary structure comprises 202 residues: 7-cyano-7-deazaguanine synthase 1 (202 aa).

7 to 17 (MSGGLDSSSAA) lines the ATP pocket. Zn(2+) contacts are provided by Cys166, Cys174, Cys177, and Cys180.

It belongs to the QueC family. The cofactor is Zn(2+).

It carries out the reaction 7-carboxy-7-deazaguanine + NH4(+) + ATP = 7-cyano-7-deazaguanine + ADP + phosphate + H2O + H(+). It functions in the pathway purine metabolism; 7-cyano-7-deazaguanine biosynthesis. Catalyzes the ATP-dependent conversion of 7-carboxy-7-deazaguanine (CDG) to 7-cyano-7-deazaguanine (preQ(0)). The protein is 7-cyano-7-deazaguanine synthase 1 (queC1) of Sulfurisphaera tokodaii (strain DSM 16993 / JCM 10545 / NBRC 100140 / 7) (Sulfolobus tokodaii).